A 308-amino-acid polypeptide reads, in one-letter code: Zinc transporter ZIP9 (308 aa).

A helical membrane pass occupies residues 4 to 24 (FLSISLLSVAMLVGCYVAGII). The N-linked (GlcNAc...) asparagine glycan is linked to N29. Helical transmembrane passes span 35–55 (LKLVTVLGAGLLCGTALAVIV), 107–127 (AYIGVSLVLGFVFMLLVDQIG), 147–167 (ITTTLGLVVHAAADGVALGAA), 177–197 (LIVFVAIMLHKAPAAFGLVSF), and 211–231 (HLLVFALAAPAMSMLTYLGLS). Residue N242 is glycosylated (N-linked (GlcNAc...) asparagine). Transmembrane regions (helical) follow at residues 245–265 (GVAMLFSAGTFLYVATVHVLP) and 287–307 (LEVAALVLGCLIPLILSIGHQ).

The protein belongs to the ZIP transporter (TC 2.A.5) family.

It is found in the golgi apparatus. It localises to the trans-Golgi network membrane. Its subcellular location is the cell membrane. The protein localises to the cytoplasm. The protein resides in the perinuclear region. It is found in the mitochondrion. It localises to the nucleus. The enzyme catalyses Zn(2+)(in) = Zn(2+)(out). Transports zinc ions across cell and organelle membranes into the cytoplasm and regulates intracellular zinc homeostasis. Participates in the zinc ions efflux out of the secretory compartments. Regulates intracellular zinc level, resulting in the enhancement of AKT1 and MAPK3/MAPK1 (Erk1/2) phosphorylation in response to the BCR activation. Also functions as a membrane androgen receptor that mediates, through a G protein, the non-classical androgen signaling pathway, characterized by the activation of MAPK3/MAPK1 (Erk1/2) and transcription factors CREB1 or ATF1. This pathway contributes to CLDN1 and CLDN5 expression and tight junction formation between adjacent Sertoli cells. Mediates androgen-induced vascular endothelial cell proliferation through activation of an inhibitory G protein leading to the AKT1 and MAPK3/MAPK1 (Erk1/2) activation which in turn modulate inhibition (phosphorylation) of GSK3B and CCND1 transcription. Moreover, has dual functions as a membrane-bound androgen receptor and as an androgen-dependent zinc transporter both of which are mediated through an inhibitory G protein (Gi) that mediates both MAP kinase and zinc signaling leading to the androgen-dependent apoptotic process. The protein is Zinc transporter ZIP9 of Mus musculus (Mouse).